A 154-amino-acid chain; its full sequence is SsrA-binding protein (154 aa).

Belongs to the SmpB family.

It localises to the cytoplasm. Required for rescue of stalled ribosomes mediated by trans-translation. Binds to transfer-messenger RNA (tmRNA), required for stable association of tmRNA with ribosomes. tmRNA and SmpB together mimic tRNA shape, replacing the anticodon stem-loop with SmpB. tmRNA is encoded by the ssrA gene; the 2 termini fold to resemble tRNA(Ala) and it encodes a 'tag peptide', a short internal open reading frame. During trans-translation Ala-aminoacylated tmRNA acts like a tRNA, entering the A-site of stalled ribosomes, displacing the stalled mRNA. The ribosome then switches to translate the ORF on the tmRNA; the nascent peptide is terminated with the 'tag peptide' encoded by the tmRNA and targeted for degradation. The ribosome is freed to recommence translation, which seems to be the essential function of trans-translation. The protein is SsrA-binding protein of Solidesulfovibrio magneticus (strain ATCC 700980 / DSM 13731 / RS-1) (Desulfovibrio magneticus).